We begin with the raw amino-acid sequence, 220 residues long: Iron-sulfur cluster repair protein YtfE (220 aa).

This sequence belongs to the RIC family. YtfE subfamily. Homodimer.

The protein localises to the cytoplasm. Di-iron-containing protein involved in the repair of iron-sulfur clusters damaged by oxidative and nitrosative stress conditions. This Shigella boydii serotype 18 (strain CDC 3083-94 / BS512) protein is Iron-sulfur cluster repair protein YtfE.